A 724-amino-acid polypeptide reads, in one-letter code: Probable serine/threonine-protein kinase KKQ8 (724 aa).

Disordered stretches follow at residues 1-81 (MVMQ…RQRS) and 93-188 (HPFR…KDIL). S19 carries the post-translational modification Phosphoserine. A compositionally biased stretch (low complexity) spans 45 to 54 (PYRSSSTSPK). The span at 95–106 (FRQTGSGASNSP) shows a compositional bias: polar residues. A compositionally biased stretch (low complexity) spans 143 to 162 (RSSSVSSCDSSNGTTSSSDS). Phosphoserine is present on residues S232, S238, and S241. Composition is skewed to polar residues over residues 318–329 (NASSLLPNVEKS) and 338–351 (GQSP…SPTQ). Residues 318–355 (NASSLLPNVEKSQTNHEKRTGQSPNDSNRSSPTQGRED) are disordered. One can recognise a Protein kinase domain in the interval 412 to 712 (GHPVGLVGAG…VGKLLDMQWM (301 aa)). ATP-binding positions include 418–426 (VGAGAYGEV) and K455. Catalysis depends on D563, which acts as the Proton acceptor.

Belongs to the protein kinase superfamily. CAMK Ser/Thr protein kinase family. NPR/HAL subfamily. HAL5 sub-subfamily.

It localises to the cytoplasm. It carries out the reaction L-seryl-[protein] + ATP = O-phospho-L-seryl-[protein] + ADP + H(+). The enzyme catalyses L-threonyl-[protein] + ATP = O-phospho-L-threonyl-[protein] + ADP + H(+). The chain is Probable serine/threonine-protein kinase KKQ8 (KKQ8) from Saccharomyces cerevisiae (strain YJM789) (Baker's yeast).